A 314-amino-acid polypeptide reads, in one-letter code: Vacuolar membrane protein FOSTERSB_4073 (314 aa).

A disordered region spans residues 32–60 (KPTSSVVSETSSKSLPSLTSSAFSTSSGA). A helical membrane pass occupies residues 93–113 (VYIAVGAVIGAIFISILIWWL). Residues S148, S254, and S274 each carry the phosphoserine modification. The segment at 240–309 (EERKLNLNRP…PSMFLDDVLN (70 aa)) is disordered. Basic and acidic residues predominate over residues 254 to 269 (SPERKEKKINSMEGYH).

Belongs to the PRM5 family.

It localises to the vacuole membrane. This is Vacuolar membrane protein FOSTERSB_4073 from Saccharomyces cerevisiae (strain FostersB) (Baker's yeast).